The primary structure comprises 430 residues: MLYEKFEYNINNLIGNFGLSKIAVAVSGGSDSVALLYLANIWAEKNNIELSVISVDHNLREQSKQETYYVQNISNSLNRKHYSLSFDHQNNFSNLQERARAGRYDLMTNLCLEFDILVLLTAHHEDDYVENFCLRLERNSGIFGLSSSNINWYNNIQIIRPLYNIPKSELVEYLVSHNIKWFEDESNSSDKYRRNIIRQKLAKGAGYIKAEIILQQLKINDLLDNKFKPELISAIAEAVKIFEYGFAFLDLVKFDKFSNEVKVQIINFLLIIISGQFRAARFYSVEPILKLITQDVNFKNTLHGCVVKRIQNELLIYREFGKKLPESKILLDKSIIWDNRFCITKNQENPDCVITYLSLEDYKTIKKQLDLAHLKDLSCKNHNAILFTLPIIKILEKVIAIPHISYYDNDMQNFEVSFAPNFVSRFTHFC.

Position 27–32 (27–32 (SGGSDS)) interacts with ATP.

This sequence belongs to the tRNA(Ile)-lysidine synthase family.

The protein resides in the cytoplasm. It catalyses the reaction cytidine(34) in tRNA(Ile2) + L-lysine + ATP = lysidine(34) in tRNA(Ile2) + AMP + diphosphate + H(+). In terms of biological role, ligates lysine onto the cytidine present at position 34 of the AUA codon-specific tRNA(Ile) that contains the anticodon CAU, in an ATP-dependent manner. Cytidine is converted to lysidine, thus changing the amino acid specificity of the tRNA from methionine to isoleucine. The sequence is that of tRNA(Ile)-lysidine synthase from Rickettsia akari (strain Hartford).